A 200-amino-acid chain; its full sequence is 3-isopropylmalate dehydratase small subunit (200 aa).

This sequence belongs to the LeuD family. LeuD type 1 subfamily. In terms of assembly, heterodimer of LeuC and LeuD.

The enzyme catalyses (2R,3S)-3-isopropylmalate = (2S)-2-isopropylmalate. It functions in the pathway amino-acid biosynthesis; L-leucine biosynthesis; L-leucine from 3-methyl-2-oxobutanoate: step 2/4. Functionally, catalyzes the isomerization between 2-isopropylmalate and 3-isopropylmalate, via the formation of 2-isopropylmaleate. The polypeptide is 3-isopropylmalate dehydratase small subunit (Campylobacter jejuni subsp. jejuni serotype O:23/36 (strain 81-176)).